The chain runs to 150 residues: 16.9 kDa class I heat shock protein 1 (150 aa).

The tract at residues 1-42 (MSLVRRSNVFDPFSLDLWDPFDSVFRSVVPATSDNDTAAFAN) is important for thermostability under elevated temperature. Residues 36–150 (DTAAFANARI…PEVKAIEISG (115 aa)) enclose the sHSP domain.

This sequence belongs to the small heat shock protein (HSP20) family. Forms oligomeric structures.

It is found in the cytoplasm. The protein is 16.9 kDa class I heat shock protein 1 (HSP16.9A) of Oryza sativa subsp. japonica (Rice).